Reading from the N-terminus, the 272-residue chain is Glutamate 5-kinase (272 aa).

Residue Lys-14 participates in ATP binding. Substrate is bound by residues Ser-54, Asp-141, and Asn-157. ATP-binding positions include 177 to 178 (SD) and 219 to 225 (TGGMLSK).

The protein belongs to the glutamate 5-kinase family.

It is found in the cytoplasm. It carries out the reaction L-glutamate + ATP = L-glutamyl 5-phosphate + ADP. It participates in amino-acid biosynthesis; L-proline biosynthesis; L-glutamate 5-semialdehyde from L-glutamate: step 1/2. Functionally, catalyzes the transfer of a phosphate group to glutamate to form L-glutamate 5-phosphate. The protein is Glutamate 5-kinase of Streptococcus pyogenes serotype M28 (strain MGAS6180).